Consider the following 238-residue polypeptide: Chorionic somatomammotropin hormone 2 (238 aa).

Positions 1–36 are cleaved as a signal peptide; that stretch reads MAPAPSFRGHQWTYNPVRGSCLLLLLVVSNLLLCQG. His-66 contacts Zn(2+). Residues Asn-70, Asn-92, Asn-146, and Asn-160 are each glycosylated (N-linked (GlcNAc...) asparagine). Cys-97 and Cys-215 are disulfide-bonded. Asp-224 lines the Zn(2+) pocket. A disulfide bond links Cys-232 and Cys-238.

This sequence belongs to the somatotropin/prolactin family.

It localises to the secreted. This chain is Chorionic somatomammotropin hormone 2 (CSH2), found in Bos taurus (Bovine).